The following is a 700-amino-acid chain: Beta-galactosidase Bga (700 aa).

R103 contacts substrate. A Zn(2+)-binding site is contributed by C107. N141 is a substrate binding site. The Proton donor role is filled by E142. C151, C153, and C156 together coordinate Zn(2+). Residue E312 is the Nucleophile of the active site. Residues W320 and E360 to H363 contribute to the substrate site. Positions D648–D658 are enriched in acidic residues. The interval D648–A674 is disordered.

This sequence belongs to the glycosyl hydrolase 42 family.

The catalysed reaction is Hydrolysis of terminal non-reducing beta-D-galactose residues in beta-D-galactosides.. Its activity is regulated as follows. Requires 4 M NaCl or KCl for maximal activity. Cleaves o-nitrophenyl-beta-D-galactopyranoside (ONPG) in vitro. This is Beta-galactosidase Bga from Halorubrum lacusprofundi (strain ATCC 49239 / DSM 5036 / JCM 8891 / ACAM 34).